Reading from the N-terminus, the 203-residue chain is Large ribosomal subunit protein bL25 (203 aa).

This sequence belongs to the bacterial ribosomal protein bL25 family. CTC subfamily. In terms of assembly, part of the 50S ribosomal subunit; part of the 5S rRNA/L5/L18/L25 subcomplex. Contacts the 5S rRNA. Binds to the 5S rRNA independently of L5 and L18.

In terms of biological role, this is one of the proteins that binds to the 5S RNA in the ribosome where it forms part of the central protuberance. The sequence is that of Large ribosomal subunit protein bL25 from Rickettsia prowazekii (strain Madrid E).